Reading from the N-terminus, the 440-residue chain is NADH-quinone oxidoreductase subunit D 1 (440 aa).

This sequence belongs to the complex I 49 kDa subunit family. NDH-1 is composed of 14 different subunits. Subunits NuoB, C, D, E, F, and G constitute the peripheral sector of the complex.

The protein localises to the cell inner membrane. It carries out the reaction a quinone + NADH + 5 H(+)(in) = a quinol + NAD(+) + 4 H(+)(out). NDH-1 shuttles electrons from NADH, via FMN and iron-sulfur (Fe-S) centers, to quinones in the respiratory chain. The immediate electron acceptor for the enzyme in this species is believed to be a menaquinone. Couples the redox reaction to proton translocation (for every two electrons transferred, four hydrogen ions are translocated across the cytoplasmic membrane), and thus conserves the redox energy in a proton gradient. This Chloroherpeton thalassium (strain ATCC 35110 / GB-78) protein is NADH-quinone oxidoreductase subunit D 1.